The sequence spans 287 residues: 4,4'-diapophytoene synthase (287 aa).

(2E,6E)-farnesyl diphosphate-binding positions include 18 to 21 (HSKS), Y41, and R45. Mg(2+) contacts are provided by D48 and D52. Q165 provides a ligand contact to (2E,6E)-farnesyl diphosphate. Residue N168 participates in Mg(2+) binding. A (2E,6E)-farnesyl diphosphate-binding site is contributed by R171. Residue D172 participates in Mg(2+) binding. Y248 lines the (2E,6E)-farnesyl diphosphate pocket.

This sequence belongs to the phytoene/squalene synthase family. CrtM subfamily. Mg(2+) is required as a cofactor.

It catalyses the reaction 2 (2E,6E)-farnesyl diphosphate = 15-cis-4,4'-diapophytoene + 2 diphosphate. Its pathway is carotenoid biosynthesis; staphyloxanthin biosynthesis; staphyloxanthin from farnesyl diphosphate: step 1/5. Involved in the biosynthesis of the yellow-orange carotenoid staphyloxanthin, which plays a role in the virulence via its protective function against oxidative stress. Catalyzes the head-to-head condensation of two molecules of farnesyl diphosphate (FPP) into the colorless C(30) carotenoid 4,4'-diapophytoene (dehydrosqualene). The chain is 4,4'-diapophytoene synthase (crtM) from Staphylococcus aureus (strain Mu50 / ATCC 700699).